The primary structure comprises 339 residues: MKRIAVLTSGGDAPGMNAAVRAVVLKAISEGIEVFGINRGYAGMVEGDIFKLDAKRVENILSRGGTFLQSARYPEFAQLEGQLKGIEQLKKYGIEGVVVIGGDGSYHGAMRLTEHGFPAVGLPGTIDNDIVGTDYTIGFDTAVATATEALDKIQDTAFSHGRTFVVEVMGRNAGDIALWAGIASGADQIIVPEEEYDINEVVRKVKEGYESGEKSHHIIVLAEGVMGAEEFAAKMKEAGDTSDLRATNLGHVIRGGSPTARDRVLASWMGAHAVDLLKEGIGGVAVGIHNEQLVESPILGTAEEGALFSLTEDGKIIVNNPHKARLDFAELNRSLANLK.

Residues G11, 72–73 (RY), and 102–105 (GDGS) each bind ATP. D103 is a Mg(2+) binding site. Substrate contacts are provided by residues 125–127 (TID), R162, and 169–171 (MGR). Residue D127 is the Proton acceptor of the active site. Residues 185–187 (GAD) and 214–216 (KSH) each bind ADP. Residues E223, R245, and 251-254 (HVIR) each bind substrate.

This sequence belongs to the phosphofructokinase type A (PFKA) family. ATP-dependent PFK group I subfamily. Prokaryotic clade 'B1' sub-subfamily. Homotetramer. Requires Mg(2+) as cofactor.

It is found in the cytoplasm. The catalysed reaction is beta-D-fructose 6-phosphate + ATP = beta-D-fructose 1,6-bisphosphate + ADP + H(+). It participates in carbohydrate degradation; glycolysis; D-glyceraldehyde 3-phosphate and glycerone phosphate from D-glucose: step 3/4. With respect to regulation, allosterically activated by ADP and other diphosphonucleosides, and allosterically inhibited by phosphoenolpyruvate. Catalyzes the phosphorylation of D-fructose 6-phosphate to fructose 1,6-bisphosphate by ATP, the first committing step of glycolysis. The polypeptide is ATP-dependent 6-phosphofructokinase (Streptococcus thermophilus (strain ATCC BAA-491 / LMD-9)).